A 150-amino-acid polypeptide reads, in one-letter code: Large ribosomal subunit protein bL9 (150 aa).

The protein belongs to the bacterial ribosomal protein bL9 family.

Binds to the 23S rRNA. The protein is Large ribosomal subunit protein bL9 of Colwellia psychrerythraea (strain 34H / ATCC BAA-681) (Vibrio psychroerythus).